The primary structure comprises 336 residues: Biotin synthase (336 aa).

The region spanning 57–286 (HHGKSIDLCS…RAIVRTAGGR (230 aa)) is the Radical SAM core domain. Positions 75, 79, and 82 each coordinate [4Fe-4S] cluster. Residues serine 119, cysteine 151, cysteine 211, and arginine 281 each contribute to the [2Fe-2S] cluster site.

The protein belongs to the radical SAM superfamily. Biotin synthase family. Homodimer. The cofactor is [4Fe-4S] cluster. [2Fe-2S] cluster is required as a cofactor.

It carries out the reaction (4R,5S)-dethiobiotin + (sulfur carrier)-SH + 2 reduced [2Fe-2S]-[ferredoxin] + 2 S-adenosyl-L-methionine = (sulfur carrier)-H + biotin + 2 5'-deoxyadenosine + 2 L-methionine + 2 oxidized [2Fe-2S]-[ferredoxin]. Its pathway is cofactor biosynthesis; biotin biosynthesis; biotin from 7,8-diaminononanoate: step 2/2. In terms of biological role, catalyzes the conversion of dethiobiotin (DTB) to biotin by the insertion of a sulfur atom into dethiobiotin via a radical-based mechanism. The chain is Biotin synthase from Desulfotalea psychrophila (strain LSv54 / DSM 12343).